Reading from the N-terminus, the 201-residue chain is Large ribosomal subunit protein uL4 (201 aa).

The disordered stretch occupies residues 44–71 (RAQKTRAEVTGSGKKPWRQKGTGRARSG).

It belongs to the universal ribosomal protein uL4 family. Part of the 50S ribosomal subunit.

In terms of biological role, one of the primary rRNA binding proteins, this protein initially binds near the 5'-end of the 23S rRNA. It is important during the early stages of 50S assembly. It makes multiple contacts with different domains of the 23S rRNA in the assembled 50S subunit and ribosome. Functionally, forms part of the polypeptide exit tunnel. In Pectobacterium carotovorum subsp. carotovorum (strain PC1), this protein is Large ribosomal subunit protein uL4.